Here is a 1141-residue protein sequence, read N- to C-terminus: cGMP-inhibited 3',5'-cyclic phosphodiesterase 3A (1141 aa).

A disordered region spans residues 1–42 (MAVPGDAARVRDKPVHSGVSQAPTAGRDCHHRADPASPRDSG). The next 6 helical transmembrane spans lie at 61–81 (LSSA…VRLV), 130–150 (LQPS…GLYL), 160–180 (AVAL…GLGV), 185–205 (LLSL…TWLV), 210–230 (LGVL…ISLE), and 232–252 (FKVA…ILLA). Ser312 is modified (phosphoserine). Phosphoserine; by PKA and PKC is present on residues Ser428 and Ser438. Positions 436–448 (RVSSTWTTTTSAT) are enriched in low complexity. A disordered region spans residues 436–482 (RVSSTWTTTTSATGLPTLEPAPVRRDRSTSIKLQEAPSSSPDSWNNP). A compositionally biased stretch (polar residues) spans 465–482 (SIKLQEAPSSSPDSWNNP). Phosphoserine is present on residues Ser492, Ser520, and Ser524. The tract at residues 590 to 640 (RPYSQGNPADEPLERSGVATRTPSRTDDTAQVTSDYETNNNSDSSDIVQNE) is disordered. Over residues 608–637 (ATRTPSRTDDTAQVTSDYETNNNSDSSDIV) the composition is skewed to polar residues. The interaction with SLFN12 stretch occupies residues 669 to 1141 (KPILAPEPLV…EEIPTQKPDQ (473 aa)). The PDEase domain maps to 674–1093 (PEPLVMDNLD…KMWKKVIEEE (420 aa)). His752 (proton donor) is an active-site residue. His752 lines the AMP pocket. Mn(2+) contacts are provided by His756, His836, Asp837, and Asp950. 3 residues coordinate AMP: Asp837, Asp950, and Gln1001. Asp837 contributes to the Mg(2+) binding site. Disordered stretches follow at residues 1023-1062 (PGKW…ESPK) and 1100-1141 (ENQS…KPDQ). The segment covering 1029-1056 (DSDESGDTDDPEEEEEEAPAPNEEETCE) has biased composition (acidic residues). Ser1033 carries the post-translational modification Phosphoserine. Thr1036 is subject to Phosphothreonine. A compositionally biased stretch (polar residues) spans 1100–1113 (ENQSLDQTPQSHSS). A Glycyl lysine isopeptide (Lys-Gly) (interchain with G-Cter in SUMO2) cross-link involves residue Lys1120. Positions 1125-1141 (EKGKPRGEEIPTQKPDQ) are enriched in basic and acidic residues.

It belongs to the cyclic nucleotide phosphodiesterase family. PDE3 subfamily. As to quaternary structure, homodimer. Interacts with SLFN12; direct low affinity interaction which is stimulated by binding of 17beta-estradiol/E2 to PDE3A and that positively regulates the ribonuclease activity of SLFN12. Mn(2+) serves as cofactor. Requires Mg(2+) as cofactor.

The protein resides in the membrane. Its subcellular location is the cytoplasm. It localises to the cytosol. The catalysed reaction is a nucleoside 3',5'-cyclic phosphate + H2O = a nucleoside 5'-phosphate + H(+). It catalyses the reaction 3',5'-cyclic AMP + H2O = AMP + H(+). It carries out the reaction 3',5'-cyclic GMP + H2O = GMP + H(+). The enzyme catalyses 3',5'-cyclic UMP + H2O = UMP + H(+). With respect to regulation, inhibited by cGMP. Inhibited by 17beta-estradiol. Inhibited by milrinone. Cyclic nucleotide phosphodiesterase with specificity for the second messengers cAMP and cGMP, which are key regulators of many important physiological processes. Also has activity toward cUMP. Independently of its catalytic activity it is part of an E2/17beta-estradiol-induced pro-apoptotic signaling pathway. E2 stabilizes the PDE3A/SLFN12 complex in the cytosol, promoting the dephosphorylation of SLFN12 and activating its pro-apoptotic ribosomal RNA/rRNA ribonuclease activity. This apoptotic pathway might be relevant in tissues with high concentration of E2 and be for instance involved in placenta remodeling. This Homo sapiens (Human) protein is cGMP-inhibited 3',5'-cyclic phosphodiesterase 3A.